Reading from the N-terminus, the 150-residue chain is Protein Smg homolog (150 aa).

It belongs to the Smg family.

The chain is Protein Smg homolog from Leptothrix cholodnii (strain ATCC 51168 / LMG 8142 / SP-6) (Leptothrix discophora (strain SP-6)).